The following is a 174-amino-acid chain: Secretory-abundant heat soluble protein 68234 (174 aa).

Positions 1-19 (MARFLVALALFGVVAMTAA) are cleaved as a signal peptide. Residues 26 to 57 (EWSGKPWLGKFVAEVTDKSENWEAFVDALGLP) form an SAHS-c1 region. The interval 72 to 100 (YKQGDHYHHIFALPDKNFEKDIEFTLGQE) is SAHS-c2. The SAHS-c3 stretch occupies residues 113 to 162 (KYSEDGEKLVADVSIPTKGKTIRSEYEVQGDQLIKTYKTGDIVAKKWFKK).

This sequence belongs to the Secretory-abundant heat soluble protein (SAHS) family.

It localises to the secreted. In terms of biological role, secreted heat soluble protein acting as a molecular shield in water-deficient condition. Tardigrade-specific intrinsically disordered proteins (TDPs) are essential for desiccation tolerance by forming non-crystalline amorphous solids upon desiccation, and this vitrified state mirrors their protective capabilities. The protein is Secretory-abundant heat soluble protein 68234 of Hypsibius exemplaris (Freshwater tardigrade).